Consider the following 180-residue polypeptide: Large ribosomal subunit protein uL5 (180 aa).

This sequence belongs to the universal ribosomal protein uL5 family. In terms of assembly, part of the 50S ribosomal subunit; part of the 5S rRNA/L5/L18/L25 subcomplex. Contacts the 5S rRNA and the P site tRNA. Forms a bridge to the 30S subunit in the 70S ribosome.

Its function is as follows. This is one of the proteins that bind and probably mediate the attachment of the 5S RNA into the large ribosomal subunit, where it forms part of the central protuberance. In the 70S ribosome it contacts protein S13 of the 30S subunit (bridge B1b), connecting the 2 subunits; this bridge is implicated in subunit movement. Contacts the P site tRNA; the 5S rRNA and some of its associated proteins might help stabilize positioning of ribosome-bound tRNAs. This chain is Large ribosomal subunit protein uL5, found in Ralstonia pickettii (strain 12J).